A 1182-amino-acid polypeptide reads, in one-letter code: CRISPR-associated endoribonuclease Cas13a (1182 aa).

Residues 132–279 are a coiled coil; the sequence is FNNLIEKVQN…ENNSDNKLKQ (148 aa). Residues 366–508 are HEPN-like fold 1; sequence YIKNTGQLET…NNEEIKGYFI (143 aa). Positions 896–955 form a coiled coil; it reads KVEKENIEDYNKKEEIEQKKKSNIEKLQDLKVELHKKWEQNKITEKEIEKYNNTTRKINE. The tract at residues 965-1120 is HEPN-like fold 2; the sequence is LQNVYLLHEM…QNHILKSTKT (156 aa).

The protein belongs to the CRISPR-associated endoribonuclease Cas13a family. Requires a divalent metal cation as cofactor.

Its activity is regulated as follows. Target RNA acts as an activator for non-specific ssRNA degradation. CRISPR (clustered regularly interspaced short palindromic repeat), is an adaptive immune system that provides protection against mobile genetic elements (viruses, transposable elements and conjugative plasmids). CRISPR clusters contain sequences complementary to antecedent mobile elements and target invading nucleic acids. Unlike many single-component effectors, this CRISPR-Cas system targets RNA. CRISPR clusters are transcribed from pre-CRISPR RNA (crRNA) and processed into crRNA by this protein. Cleaves linear target ssRNA in a pre-crRNA-dependent fashion, preferentially before U residues. Binding a viable target RNA target activates this protein for non-specific RNA degradation in vitro (called collateral RNA degradation), which is fairly sensitive as it requires picomolar levels of viable target RNA. The polypeptide is CRISPR-associated endoribonuclease Cas13a (Leptotrichia wadei (strain F0279)).